The primary structure comprises 131 residues: Large ribosomal subunit protein bL17 (131 aa).

The protein belongs to the bacterial ribosomal protein bL17 family. As to quaternary structure, part of the 50S ribosomal subunit. Contacts protein L32.

This chain is Large ribosomal subunit protein bL17, found in Methylibium petroleiphilum (strain ATCC BAA-1232 / LMG 22953 / PM1).